Here is a 251-residue protein sequence, read N- to C-terminus: Ribosome maturation factor RimP (251 aa).

The segment at 176-251 is disordered; the sequence is SLRRGSAPPQ…ARLKNRDTLH (76 aa). Positions 186–196 are enriched in acidic residues; that stretch reads DGEEGDEEEGA. Over residues 216–226 the composition is skewed to basic and acidic residues; that stretch reads PKLDKKSDKPV.

Belongs to the RimP family.

It is found in the cytoplasm. Required for maturation of 30S ribosomal subunits. In Methylorubrum extorquens (strain PA1) (Methylobacterium extorquens), this protein is Ribosome maturation factor RimP.